A 156-amino-acid chain; its full sequence is Cyanate hydratase (156 aa).

Active-site residues include arginine 96, glutamate 99, and serine 122.

It belongs to the cyanase family.

It carries out the reaction cyanate + hydrogencarbonate + 3 H(+) = NH4(+) + 2 CO2. Functionally, catalyzes the reaction of cyanate with bicarbonate to produce ammonia and carbon dioxide. The chain is Cyanate hydratase from Pseudomonas paraeruginosa (strain DSM 24068 / PA7) (Pseudomonas aeruginosa (strain PA7)).